The sequence spans 322 residues: Serine/threonine-protein phosphatase PP1-2 (322 aa).

4 residues coordinate Mn(2+): Asp60, His62, Asp88, and Asn120. Residue His121 is the Proton donor of the active site. The Mn(2+) site is built by His169 and His244. The segment at Arg298 to Asn322 is disordered. Residues Val301 to Leu316 are compositionally biased toward polar residues.

This sequence belongs to the PPP phosphatase family. PP-1 subfamily. It depends on Mn(2+) as a cofactor.

The catalysed reaction is O-phospho-L-seryl-[protein] + H2O = L-seryl-[protein] + phosphate. The enzyme catalyses O-phospho-L-threonyl-[protein] + H2O = L-threonyl-[protein] + phosphate. In terms of biological role, essential role in cell cycle control. PP1 is perhaps required for exit from mitosis. This chain is Serine/threonine-protein phosphatase PP1-2 (sds21), found in Schizosaccharomyces pombe (strain 972 / ATCC 24843) (Fission yeast).